The sequence spans 1020 residues: Nucleotide-binding oligomerization domain-containing protein 2 (1020 aa).

CARD domains follow at residues 6–104 and 106–200; these read CDMC…GSWD and HSLH…AECQ. The ATG16L1-binding motif signature appears at 43-57; sequence WDVLSREDYEGLSLP. Positions 219, 232, 233, 282, 283, 284, 285, 286, and 287 each coordinate ADP. The interval 221-254 is required for CARD9 binding; that stretch reads DGSENLCLEDIYTENILELQTEVGTAGALQKSPA. Residues 273–600 enclose the NACHT domain; sequence DTILVVGEAG…AAFYLAVSAD (328 aa). A lipid anchor (S-palmitoyl cysteine) is attached at cysteine 375. Histidine 583 serves as a coordination point for ADP. LRR repeat units follow at residues 685 to 709, 726 to 749, 766 to 792, 794 to 817, 822 to 845, 850 to 873, 906 to 929, 934 to 962, 963 to 985, and 1005 to 1019; these read ARARSCLAHSLREHFHSIPPAVPGE, LYEMQEEQLAQEAVRRLDIGHLKL, LQHLQRPVALQLDYNSVGDVGVEQLRP, LGVCTALYLRDNNISDRGARTLVE, CEQLQKLALFNNKLTDACACSMAK, KQNFLSLRVGNNHITAAGAEVLAQ, HQNLKWLSLVGNNIGSMGAEALAL, NKSLEELCLEENHICDEGVYSLAEGLKRN, STLKFLKLSNNGITYRGAEALLQ, and LEEIQTLSSRDARLL.

Belongs to the NOD1-NOD2 family. As to quaternary structure, homooligomer: homooligomerizes following muramyl dipeptide (MDP)-binding, promoting RIPK2 recruitment. Interacts (via CARD domain) with RIPK2 (via CARD domain). Following RIPK2 recruitment, RIPK2 homooligomerizes via its CARD domain and forms long filaments named RIPosomes. Interacts (via CARD domain) with ubiquitin; inhibiting interaction with RIPK2. Component of a signaling complex consisting of ARHGEF2, NOD2 and RIPK2. Interacts with ANKRD17 (via N-terminus). Interacts with HSPA1A; the interaction enhances NOD2 stability. Interacts (via both CARD domains) with HSP90; the interaction enhances NOD2 stability. Interacts (via CARD domain) with SOCS3; the interaction promotes NOD2 degradation. Interacts (via CARD domain) with ERBIN; the interaction inhibits activation of NOD2. Interacts with MAPKBP1; the interaction is enhanced in the presence of muramyl dipeptide (MDP) and inhibits NOD2 homooligomerization and activation. Interacts with INAVA; the interaction takes place upon Pattern recognition receptor (PRR) stimulation. Interacts (via NACHT domain) with CARD9. Interacts (via CARD domain) with CASP1; this interaction leads to IL1B processing. Also interacts with CASP4. Interacts with NLRP1; this interaction is enhanced in the presence of muramyl dipeptide (MDP) and leads to increased IL1B release. Interacts with NLRP12; this interaction promotes degradation of NOD2 through the ubiquitin-proteasome pathway. Interacts with ANKHD1, C10orf67, CHMP5, DOCK7, ENTR1, KRT15, LDOC1, PPP1R12C, PPP2R3B, TRIM41 and VIM. Interacts with MAVS; interaction takes place following single-stranded RNA (ssRNA)-binding. Interacts with ATG16L1. Interacts with Irgm1; promoting Irgm1 'Lys-63'-linked polyubiquitination, which is required for interactions with the core autophagy factors. In terms of processing, palmitoylated by ZDHHC5; palmitoylation is required for proper recruitment to the bacterial entry site and hence for proper signaling upon cognate peptidoglycan detection. Palmitoylation promotes localization to the cell membrane. Palmitoylation protects from SQSTM1/p62-dependent autophagic degradation. Post-translationally, polyubiquitinated by TRIM27, leading to proteasome-mediated degradation. Polyubiquitinated and degraded following muramyl dipeptide (MDP) stimulation, conferring MDP tolerance and preventing septic shock. Degraded via selective autophagy following interaction with Irgm1. Irgm1 promotes NOD2-RIPK2 RIPosome recruitment to autophagosome membranes, promoting their SQSTM1/p62-dependent autophagic degradation. In terms of processing, O-glycosylated by OGT, O-GlcNAcylation increases protein stability. Expressed in monocytes, macrophages, dendritic cells, hepatocytes, preadipocytes, epithelial cells of oral cavity, lung and intestine. In intestine, highly expressed in ileal Paneth cells of the crypt and in intestinal stem cells. Also expressed in neurons of several brain regions including the hypothalamus.

The protein localises to the cell membrane. It is found in the basolateral cell membrane. The protein resides in the cytoplasm. It localises to the mitochondrion. With respect to regulation, ADP-binding promotes an inactive closed conformation. Pattern recognition receptor (PRR) that detects bacterial peptidoglycan fragments and other danger signals and plays an important role in gastrointestinal immunity. Specifically activated by muramyl dipeptide (MDP), a fragment of bacterial peptidoglycan found in every bacterial peptidoglycan type. NOD2 specifically recognizes and binds 6-O-phospho-MDP, the phosphorylated form of MDP, which is generated by NAGK. 6-O-phospho-MDP-binding triggers oligomerization that facilitates the binding and subsequent activation of the proximal adapter receptor-interacting RIPK2. Following recruitment, RIPK2 undergoes 'Met-1'- (linear) and 'Lys-63'-linked polyubiquitination by E3 ubiquitin-protein ligases XIAP, BIRC2, BIRC3 and the LUBAC complex, becoming a scaffolding protein for downstream effectors, triggering activation of the NF-kappa-B and MAP kinases signaling. This in turn leads to the transcriptional activation of hundreds of genes involved in immune response. Its ability to detect bacterial MDP plays a central role in maintaining the equilibrium between intestinal microbiota and host immune responses to control inflammation. An imbalance in this relationship results in dysbiosis, whereby pathogenic bacteria prevail on commensals, causing damage in the intestinal epithelial barrier as well as allowing bacterial invasion and inflammation. Acts as a regulator of appetite by sensing MDP in a subset of brain neurons: microbiota-derived MDP reach the brain, where they bind and activate NOD2 in inhibitory hypothalamic neurons, decreasing neuronal activity, thereby regulating satiety and body temperature. NOD2-dependent MDP-sensing of bacterial cell walls in the intestinal epithelial compartment contributes to sustained postnatal growth upon undernutrition. Also plays a role in antiviral response by acting as a sensor of single-stranded RNA (ssRNA) from viruses: upon ssRNA-binding, interacts with MAVS, leading to activation of interferon regulatory factor-3/IRF3 and expression of type I interferon. Also acts as a regulator of autophagy in dendritic cells via its interaction with ATG16L1, possibly by recruiting ATG16L1 at the site of bacterial entry. NOD2 activation in the small intestine crypt also contributes to intestinal stem cells survival and function: acts by promoting mitophagy via its association with ATG16L1. In addition to its main role in innate immunity, also regulates the adaptive immune system by acting as regulator of helper T-cell and regulatory T-cells (Tregs). Besides recognizing pathogens, also involved in the endoplasmic reticulum stress response: acts by sensing and binding to the cytosolic metabolite sphingosine-1-phosphate generated in response to endoplasmic reticulum stress, initiating an inflammation process that leads to activation of the NF-kappa-B and MAP kinases signaling. May also be involved in NLRP1 activation following activation by MDP, leading to CASP1 activation and IL1B release in macrophages. In Mus musculus (Mouse), this protein is Nucleotide-binding oligomerization domain-containing protein 2.